A 501-amino-acid chain; its full sequence is Lysine--tRNA ligase (501 aa).

Mg(2+)-binding residues include Glu410 and Glu417.

The protein belongs to the class-II aminoacyl-tRNA synthetase family. As to quaternary structure, homodimer. Requires Mg(2+) as cofactor.

Its subcellular location is the cytoplasm. The enzyme catalyses tRNA(Lys) + L-lysine + ATP = L-lysyl-tRNA(Lys) + AMP + diphosphate. This Shewanella pealeana (strain ATCC 700345 / ANG-SQ1) protein is Lysine--tRNA ligase.